Consider the following 126-residue polypeptide: Methylglyoxal synthase (126 aa).

An MGS-like domain is found at Met1–Gln126. Residues His9, Lys13, Thr35–Thr38, and Ser55–Gly56 each bind substrate. The active-site Proton donor/acceptor is Asp61. Substrate is bound at residue His88.

The protein belongs to the methylglyoxal synthase family.

The catalysed reaction is dihydroxyacetone phosphate = methylglyoxal + phosphate. In terms of biological role, catalyzes the formation of methylglyoxal from dihydroxyacetone phosphate. In Thermus thermophilus (strain ATCC BAA-163 / DSM 7039 / HB27), this protein is Methylglyoxal synthase.